The primary structure comprises 558 residues: SPATS2-like protein (558 aa).

Position 2 is an N-acetylalanine (alanine 2). Residues glycine 63 to glutamine 79 are compositionally biased toward basic residues. The interval glycine 63–alanine 204 is disordered. 2 stretches are compositionally biased toward basic and acidic residues: residues glycine 80–glutamate 92 and glycine 110–arginine 142. Serine 120 carries the phosphoserine modification. Residues lysine 279–leucine 344 are a coiled coil. Disordered stretches follow at residues glycine 385–lysine 406 and threonine 421–alanine 514. The span at threonine 421–serine 433 shows a compositional bias: polar residues. Positions histidine 469–glycine 485 are enriched in basic residues.

This sequence belongs to the SPATS2 family.

Its subcellular location is the cytoplasm. It localises to the nucleus. The protein localises to the nucleolus. The chain is SPATS2-like protein (Spats2l) from Mus musculus (Mouse).